The primary structure comprises 290 residues: 4-hydroxy-tetrahydrodipicolinate synthase (290 aa).

Position 44 (Thr-44) interacts with pyruvate. Tyr-132 acts as the Proton donor/acceptor in catalysis. Lys-160 serves as the catalytic Schiff-base intermediate with substrate. Ile-202 serves as a coordination point for pyruvate.

It belongs to the DapA family. In terms of assembly, homotetramer; dimer of dimers.

It localises to the cytoplasm. The enzyme catalyses L-aspartate 4-semialdehyde + pyruvate = (2S,4S)-4-hydroxy-2,3,4,5-tetrahydrodipicolinate + H2O + H(+). It functions in the pathway amino-acid biosynthesis; L-lysine biosynthesis via DAP pathway; (S)-tetrahydrodipicolinate from L-aspartate: step 3/4. Functionally, catalyzes the condensation of (S)-aspartate-beta-semialdehyde [(S)-ASA] and pyruvate to 4-hydroxy-tetrahydrodipicolinate (HTPA). The protein is 4-hydroxy-tetrahydrodipicolinate synthase of Geotalea uraniireducens (strain Rf4) (Geobacter uraniireducens).